A 307-amino-acid polypeptide reads, in one-letter code: Putative flagellar export/assembly protein LafU (307 aa).

Residues Ala-32–Val-54 traverse the membrane as a helical segment. Residues Ser-87 to Arg-108 form a disordered region. The OmpA-like domain maps to Leu-154–Ser-272.

This sequence belongs to the MotB family.

It is found in the cell inner membrane. Functionally, part of the flagellar gene cluster Flag-2. However, the Flag-2 flagellar system could be inactive in strain 042 due to a frameshift in lfgC. This is Putative flagellar export/assembly protein LafU from Escherichia coli O44:H18 (strain 042 / EAEC).